A 161-amino-acid chain; its full sequence is Nucleotide-binding protein Spea_3114 (161 aa).

Belongs to the YajQ family.

Functionally, nucleotide-binding protein. In Shewanella pealeana (strain ATCC 700345 / ANG-SQ1), this protein is Nucleotide-binding protein Spea_3114.